We begin with the raw amino-acid sequence, 435 residues long: Phosphomethylpyrimidine synthase (435 aa).

Substrate-binding positions include N67, M96, Y125, H163, 185–187 (SRG), 226–229 (DGLR), and E265. H269 contacts Zn(2+). A substrate-binding site is contributed by Y292. Position 333 (H333) interacts with Zn(2+). [4Fe-4S] cluster-binding residues include C408, C411, and C415.

This sequence belongs to the ThiC family. [4Fe-4S] cluster serves as cofactor.

The enzyme catalyses 5-amino-1-(5-phospho-beta-D-ribosyl)imidazole + S-adenosyl-L-methionine = 4-amino-2-methyl-5-(phosphooxymethyl)pyrimidine + CO + 5'-deoxyadenosine + formate + L-methionine + 3 H(+). The protein operates within cofactor biosynthesis; thiamine diphosphate biosynthesis. Catalyzes the synthesis of the hydroxymethylpyrimidine phosphate (HMP-P) moiety of thiamine from aminoimidazole ribotide (AIR) in a radical S-adenosyl-L-methionine (SAM)-dependent reaction. The protein is Phosphomethylpyrimidine synthase of Thermus thermophilus (strain ATCC BAA-163 / DSM 7039 / HB27).